The chain runs to 1317 residues: Clustered mitochondria protein homolog (1317 aa).

A Clu domain is found at 382-626; it reads DITRSQESYL…RVTPLDVTWQ (245 aa). The span at 669 to 689 shows a compositional bias: basic and acidic residues; sequence KAQEEAANKEQSSEVTESKEQ. Disordered regions lie at residues 669-700 and 939-966; these read KAQE…EALD and ANGV…PSRA. TPR repeat units follow at residues 1040–1073, 1082–1115, and 1124–1157; these read AKLY…TERT, ILAY…WKII, and ITTM…CESL. Disordered stretches follow at residues 1252–1273 and 1288–1317; these read VQPQ…ANAS and GGDA…KSSA.

Belongs to the CLU family. In terms of assembly, may associate with the eukaryotic translation initiation factor 3 (eIF-3) complex.

The protein resides in the cytoplasm. Functionally, mRNA-binding protein involved in proper cytoplasmic distribution of mitochondria. This is Clustered mitochondria protein homolog from Neosartorya fischeri (strain ATCC 1020 / DSM 3700 / CBS 544.65 / FGSC A1164 / JCM 1740 / NRRL 181 / WB 181) (Aspergillus fischerianus).